Consider the following 185-residue polypeptide: Large ribosomal subunit protein uL5 (185 aa).

The protein belongs to the universal ribosomal protein uL5 family. Part of the 50S ribosomal subunit; part of the 5S rRNA/L5/L18/L25 subcomplex. Contacts the 5S rRNA and the P site tRNA. Forms a bridge to the 30S subunit in the 70S ribosome.

This is one of the proteins that bind and probably mediate the attachment of the 5S RNA into the large ribosomal subunit, where it forms part of the central protuberance. In the 70S ribosome it contacts protein S13 of the 30S subunit (bridge B1b), connecting the 2 subunits; this bridge is implicated in subunit movement. Contacts the P site tRNA; the 5S rRNA and some of its associated proteins might help stabilize positioning of ribosome-bound tRNAs. This Chelativorans sp. (strain BNC1) protein is Large ribosomal subunit protein uL5.